Reading from the N-terminus, the 122-residue chain is S-adenosylmethionine decarboxylase proenzyme (122 aa).

Ser63 serves as the catalytic Schiff-base intermediate with substrate; via pyruvic acid. Pyruvic acid (Ser); by autocatalysis is present on Ser63. Residue His68 is the Proton acceptor; for processing activity of the active site. Cys83 acts as the Proton donor; for catalytic activity in catalysis.

The protein belongs to the prokaryotic AdoMetDC family. Type 1 subfamily. As to quaternary structure, heterotetramer of two alpha and two beta chains arranged as a dimer of alpha/beta heterodimers. Pyruvate is required as a cofactor. Is synthesized initially as an inactive proenzyme. Formation of the active enzyme involves a self-maturation process in which the active site pyruvoyl group is generated from an internal serine residue via an autocatalytic post-translational modification. Two non-identical subunits are generated from the proenzyme in this reaction, and the pyruvate is formed at the N-terminus of the alpha chain, which is derived from the carboxyl end of the proenzyme. The post-translation cleavage follows an unusual pathway, termed non-hydrolytic serinolysis, in which the side chain hydroxyl group of the serine supplies its oxygen atom to form the C-terminus of the beta chain, while the remainder of the serine residue undergoes an oxidative deamination to produce ammonia and the pyruvoyl group blocking the N-terminus of the alpha chain.

The catalysed reaction is S-adenosyl-L-methionine + H(+) = S-adenosyl 3-(methylsulfanyl)propylamine + CO2. It functions in the pathway amine and polyamine biosynthesis; S-adenosylmethioninamine biosynthesis; S-adenosylmethioninamine from S-adenosyl-L-methionine: step 1/1. Catalyzes the decarboxylation of S-adenosylmethionine to S-adenosylmethioninamine (dcAdoMet), the propylamine donor required for the synthesis of the polyamines spermine and spermidine from the diamine putrescine. The chain is S-adenosylmethionine decarboxylase proenzyme from Methanococcus maripaludis (strain C7 / ATCC BAA-1331).